We begin with the raw amino-acid sequence, 213 residues long: Putative 3-methyladenine DNA glycosylase (213 aa).

The protein belongs to the DNA glycosylase MPG family.

The chain is Putative 3-methyladenine DNA glycosylase from Latilactobacillus sakei subsp. sakei (strain 23K) (Lactobacillus sakei subsp. sakei).